Reading from the N-terminus, the 363-residue chain is 3-methyl-D-ornithine--L-lysine ligase (363 aa).

K10 is a binding site for ATP. L11–Q12 is an L-lysine binding site. ATP contacts are provided by residues D31, D49 to V50, and E72 to N73. E72 provides a ligand contact to L-lysine. Residues E85 to G269 enclose the ATP-grasp domain. Residues K104, K131, S138, and E160–V163 contribute to the ADP site. D-ornithine is bound by residues S169–E171 and D225. The Mg(2+) site is built by E227, E239, and D241. E239 contributes to the ADP binding site. D-ornithine-binding positions include R243 to T248 and E302. Positions 246 and 302 each coordinate L-lysine.

It belongs to the PylC family. Requires Mg(2+) as cofactor.

The enzyme catalyses (3R)-3-methyl-D-ornithine + L-lysine + ATP = (3R)-3-methyl-D-ornithyl-N(6)-L-lysine + ADP + phosphate + H(+). Its pathway is amino-acid biosynthesis; L-pyrrolysine biosynthesis. Its function is as follows. Is required for the biosynthesis of pyrrolysine. Catalyzes the ATP-dependent ligation between (3R)-3-methyl-D-ornithine and L-lysine, leading to (3R)-3-methyl-D-ornithyl-N6-L-lysine. This chain is 3-methyl-D-ornithine--L-lysine ligase, found in Methanosarcina acetivorans (strain ATCC 35395 / DSM 2834 / JCM 12185 / C2A).